The sequence spans 229 residues: Large ribosomal subunit protein uL1 (229 aa).

This sequence belongs to the universal ribosomal protein uL1 family. In terms of assembly, part of the 50S ribosomal subunit.

Binds directly to 23S rRNA. The L1 stalk is quite mobile in the ribosome, and is involved in E site tRNA release. Functionally, protein L1 is also a translational repressor protein, it controls the translation of the L11 operon by binding to its mRNA. This chain is Large ribosomal subunit protein uL1, found in Rhodopseudomonas palustris (strain BisB5).